The sequence spans 224 residues: Peroxynitrite isomerase 2 (224 aa).

Positions 71–77 match the GXWXGXG motif; it reads GVWRGEG. Heme b is bound by residues Lys-187 and His-214.

This sequence belongs to the nitrobindin family. As to quaternary structure, homodimer. The cofactor is heme b.

The catalysed reaction is peroxynitrite = nitrate. Its pathway is nitrogen metabolism. Heme-binding protein able to scavenge peroxynitrite and to protect free L-tyrosine against peroxynitrite-mediated nitration, by acting as a peroxynitrite isomerase that converts peroxynitrite to nitrate. Therefore, this protein likely plays a role in peroxynitrite sensing and in the detoxification of reactive nitrogen and oxygen species (RNS and ROS, respectively). Is able to bind nitric oxide (NO) in vitro, but may act as a sensor of peroxynitrite levels in vivo. This is Peroxynitrite isomerase 2 from Mycobacterium sp. (strain JLS).